Consider the following 349-residue polypeptide: Ion-translocating oxidoreductase complex subunit D (349 aa).

4 helical membrane passes run 20-40 (IMFL…YFFG), 42-62 (GVLI…IIIL), 83-105 (VLLG…CFFA), and 120-140 (IFNP…VHMT). The residue at position 184 (Thr-184) is an FMN phosphoryl threonine. Helical transmembrane passes span 212–232 (IVSI…CFLL), 236–256 (VICW…SSIT), 263–283 (FFCS…AFFI), 291–311 (SCTK…VWII), and 319–339 (DGIA…DAYL).

The protein belongs to the NqrB/RnfD family. As to quaternary structure, the complex is composed of six subunits: RnfA, RnfB, RnfC, RnfD, RnfE and RnfG. The cofactor is FMN.

The protein localises to the cell inner membrane. Functionally, part of a membrane-bound complex that couples electron transfer with translocation of ions across the membrane. This chain is Ion-translocating oxidoreductase complex subunit D, found in Buchnera aphidicola subsp. Schizaphis graminum (strain Sg).